The sequence spans 408 residues: tRNA wybutosine-synthesizing protein 2 homolog (408 aa).

Residues Ser-201, Lys-208, Glu-248, and Asp-276–Asn-277 contribute to the S-adenosyl-L-methionine site.

This sequence belongs to the class I-like SAM-binding methyltransferase superfamily. TRM5/TYW2 family.

The enzyme catalyses 4-demethylwyosine(37) in tRNA(Phe) + S-adenosyl-L-methionine = 4-demethyl-7-[(3S)-3-amino-3-carboxypropyl]wyosine(37) in tRNA(Phe) + S-methyl-5'-thioadenosine + H(+). The protein operates within tRNA modification; wybutosine-tRNA(Phe) biosynthesis. Its function is as follows. S-adenosyl-L-methionine-dependent transferase that acts as a component of the wybutosine biosynthesis pathway. Wybutosine is a hyper modified guanosine with a tricyclic base found at the 3'-position adjacent to the anticodon of eukaryotic phenylalanine tRNA. Catalyzes the transfer of the alpha-amino-alpha-carboxypropyl (acp) group from S-adenosyl-L-methionine to the C-7 position of 4-demethylwyosine (imG-14) to produce wybutosine-86. The sequence is that of tRNA wybutosine-synthesizing protein 2 homolog (trmt12) from Danio rerio (Zebrafish).